A 257-amino-acid chain; its full sequence is Outer dense fiber protein 4 (257 aa).

The disordered stretch occupies residues 1–41 (MDAEYSGNEFPRSEGERDQHQRPGKERKSGEAGWGTGELGQ). Residues 11-30 (PRSEGERDQHQRPGKERKSG) are compositionally biased toward basic and acidic residues. Position 64 is a phosphoserine (Ser64). Helical transmembrane passes span 80-100 (AQVL…VVAF), 152-172 (VTFI…FELE), and 179-199 (IGWS…CAIL).

Expressed in testis and sperm; especially localized to sperm tail (at protein level).

It is found in the membrane. Functionally, component of the outer dense fibers (ODF) of spermatozoa which could be involved in sperm tail structure, sperm movement and general organization of cellular cytoskeleton. The sequence is that of Outer dense fiber protein 4 (ODF4) from Homo sapiens (Human).